A 493-amino-acid chain; its full sequence is Neuronal acetylcholine receptor subunit alpha-6 (493 aa).

A signal peptide spans 1-30 (MLNGWGRGDLRSGLCLWICGFLAFFKGSRG). The Extracellular segment spans residues 31–240 (CVSEEQLFHT…TYSFYIRRLP (210 aa)). 2 N-linked (GlcNAc...) asparagine glycosylation sites follow: asparagine 54 and asparagine 171. Disulfide bonds link cysteine 158–cysteine 172 and cysteine 222–cysteine 223. 3 consecutive transmembrane segments (helical) span residues 241–265 (MFYT…FYLP), 272–290 (VTLC…LVIT), and 306–327 (YLLF…VLNI). Residues 328 to 464 (HYRTPATHTM…WKYMAMVVDR (137 aa)) lie on the Cytoplasmic side of the membrane. Serine 401 is modified (phosphoserine). The helical transmembrane segment at 465–484 (VFLWVFIIVCVFGTVGLFLQ) threads the bilayer.

It belongs to the ligand-gated ion channel (TC 1.A.9) family. Acetylcholine receptor (TC 1.A.9.1) subfamily. Alpha-6/CHRNA6 sub-subfamily. Neuronal AChR is composed of two different types of subunits: alpha and non-alpha (beta). CHRNA6/alpha-6 subunit can be combined to CHRNB2/beta-2 and CHRNA4/alpha-4 to give rise to functional receptors. Interacts with LYPD6. As to expression, predominantly expressed in only a few brain areas, including dopaminergic neurons, norepirephrine neurons and cells of the visual system.

It localises to the synaptic cell membrane. It catalyses the reaction Ca(2+)(in) = Ca(2+)(out). The catalysed reaction is K(+)(in) = K(+)(out). It carries out the reaction Na(+)(in) = Na(+)(out). With respect to regulation, activated by a myriad of ligands such as acetylcholine, cytisine and nicotine. CHRNA6 nAChR activity is inhibited by the antagonists alpha-conotoxin MII and PIA, a small disulfide-constrained peptides from cone snails. Its function is as follows. Component of neuronal acetylcholine receptors (nAChRs) that function as pentameric, ligand-gated cation channels with high calcium permeability among other activities. nAChRs are excitatory neurotrasnmitter receptors formed by a collection of nAChR subunits known to mediate synaptic transmission in the nervous system and the neuromuscular junction. Each nAchR subunit confers differential attributes to channel properties, including activation, deactivation and desensitization kinetics, pH sensitivity, cation permeability, and binding to allosteric modulators. CHRNA6 forms pentameric channels with CHRNB2 and CHRNA4 that exhibit high sensitivity to ACh and nicotine and are predominantly expressed in only a few brain areas, including dopaminergic neurons, norepirephrine neurons and cells of the visual system. nAChrs containing CHRNA6 subunits mediate endogenous cholinergic modulation of dopamine and gamma-aminobutyric acid (GABA) release in response to nicotine at nerve terminals. This Rattus norvegicus (Rat) protein is Neuronal acetylcholine receptor subunit alpha-6 (Chrna6).